Consider the following 277-residue polypeptide: NADPH-dependent 7-cyano-7-deazaguanine reductase (277 aa).

83–85 (IES) is a substrate binding site. 85 to 86 (SK) provides a ligand contact to NADPH. Cys-184 (thioimide intermediate) is an active-site residue. Asp-191 acts as the Proton donor in catalysis. Residue 223–224 (HE) coordinates substrate. 252 to 253 (RG) lines the NADPH pocket.

The protein belongs to the GTP cyclohydrolase I family. QueF type 2 subfamily. As to quaternary structure, homodimer.

It localises to the cytoplasm. It catalyses the reaction 7-aminomethyl-7-carbaguanine + 2 NADP(+) = 7-cyano-7-deazaguanine + 2 NADPH + 3 H(+). It participates in tRNA modification; tRNA-queuosine biosynthesis. Functionally, catalyzes the NADPH-dependent reduction of 7-cyano-7-deazaguanine (preQ0) to 7-aminomethyl-7-deazaguanine (preQ1). This is NADPH-dependent 7-cyano-7-deazaguanine reductase from Cupriavidus pinatubonensis (strain JMP 134 / LMG 1197) (Cupriavidus necator (strain JMP 134)).